A 1275-amino-acid chain; its full sequence is Histone-lysine N-methyltransferase PRDM16 (1275 aa).

The segment covering 1-10 (MRSKARARKL) has biased composition (basic residues). Positions 1–66 (MRSKARARKL…SEDFTPKEGS (66 aa)) are disordered. Residues 82–211 (PDFELRESSI…PGEELLVHVK (130 aa)) enclose the SET domain. A C2H2-type 1; degenerate zinc finger spans residues 230–255 (FRCDECDELFQCRLDLRRHKKYACSS). 5 consecutive C2H2-type zinc fingers follow at residues 282–304 (HECK…MIVH), 310–332 (YKCD…QMSH), 338–361 (FECE…RSQH), 367–389 (HACP…KHIH), and 395–417 (FICE…KRMH). A C2H2-type 7; atypical zinc finger spans residues 424-446 (IKCKDCGQMFSTTSSLNKHRRFC). 2 disordered regions span residues 592-658 (VKNR…VPPG) and 789-838 (APKV…GVSE). A compositionally biased stretch (low complexity) spans 610 to 625 (TTTGTDLDTTTGTGSD). Basic and acidic residues-rich tracts occupy residues 631–648 (DSDR…ESKP) and 821–835 (REPR…RKPG). An interaction with CTBP1, CTBP2 and ZNF516 region spans residues 680–1038 (EEQLLTASGA…KHEHEGAPVS (359 aa)). Residues 740–1275 (PFTDRALAHN…SGAFNPINHL (536 aa)) are mediates interaction with SKI and regulation of TGF-beta signaling. C2H2-type zinc fingers lie at residues 951-973 (YTCR…LRTH), 979-1002 (YRCK…RNIH), and 1008-1030 (FKCH…LKKH). 2 disordered regions span residues 1027-1065 (LKKH…HALL) and 1084-1169 (EMNQ…MGFD). The segment covering 1038 to 1058 (SQHSGVLTNHLGTSASSPTSE) has biased composition (polar residues). Over residues 1117-1133 (DVEEEEEEELEEEDDDS) the composition is skewed to acidic residues.

This sequence belongs to the PRDM16 family. As to quaternary structure, interacts with CEBPA, CEBPB and CEBPD; the interaction is direct. Interacts with PPARG and PPARA; controls brown adipocytes. Interacts with CTBP1 and CTBP2; represses the expression of WAT-specific genes. Interacts with PPARGC1A and PPARGC1B; interaction with PPARGC1A or PPARGC1B activates the transcription of BAT-specific gene. Interacts with HDAC1, SKI and SMAD2; the interaction with SKI promotes the recruitment of SMAD3-HDAC1 complex on the promoter of TGF-beta target genes. Interacts with ZNF516; the interaction is direct and may play a role in the transcription of brown adipose tissue-specific gene. Enriched in BAT compared to WAT. Detected in heart, lung, kidney and brain. Expressed in nuclei of cardiomyocytes.

The protein resides in the nucleus. It localises to the cytoplasm. It carries out the reaction L-lysyl(9)-[histone H3] + S-adenosyl-L-methionine = N(6)-methyl-L-lysyl(9)-[histone H3] + S-adenosyl-L-homocysteine + H(+). Binds DNA and functions as a transcriptional regulator. Displays histone methyltransferase activity and monomethylates 'Lys-9' of histone H3 (H3K9me1) in vitro. Probably catalyzes the monomethylation of free histone H3 in the cytoplasm which is then transported to the nucleus and incorporated into nucleosomes where SUV39H methyltransferases use it as a substrate to catalyze histone H3 'Lys-9' trimethylation. Likely to be one of the primary histone methyltransferases along with MECOM/PRDM3 that direct cytoplasmic H3K9me1 methylation. Functions in the differentiation of brown adipose tissue (BAT) which is specialized in dissipating chemical energy in the form of heat in response to cold or excess feeding while white adipose tissue (WAT) is specialized in the storage of excess energy and the control of systemic metabolism. Together with CEBPB, regulates the differentiation of myoblastic precursors into brown adipose cells. Functions as a repressor of TGF-beta signaling. The chain is Histone-lysine N-methyltransferase PRDM16 from Mus musculus (Mouse).